Consider the following 556-residue polypeptide: Glycosyl hydrolase 5 family protein (556 aa).

Residues Met-1–Ser-28 form the signal peptide. Residues Asn-102 and Asn-113 are each glycosylated (N-linked (GlcNAc...) asparagine). Glu-208 serves as the catalytic Proton donor/acceptor. Asn-212, Asn-290, and Asn-307 each carry an N-linked (GlcNAc...) asparagine glycan. Catalysis depends on Glu-473, which acts as the Nucleophile. 2 N-linked (GlcNAc...) asparagine glycosylation sites follow: Asn-474 and Asn-479.

This sequence belongs to the glycosyl hydrolase 5 (cellulase A) family. In terms of processing, glycosylated.

Functionally, may have glycosyl hydrolase activity. The chain is Glycosyl hydrolase 5 family protein from Chamaecyparis obtusa (Hinoki false-cypress).